A 238-amino-acid chain; its full sequence is Large ribosomal subunit protein uL3 (238 aa).

This sequence belongs to the universal ribosomal protein uL3 family. Part of the 50S ribosomal subunit. Forms a cluster with proteins L14 and L19.

In terms of biological role, one of the primary rRNA binding proteins, it binds directly near the 3'-end of the 23S rRNA, where it nucleates assembly of the 50S subunit. This chain is Large ribosomal subunit protein uL3, found in Mesoplasma florum (strain ATCC 33453 / NBRC 100688 / NCTC 11704 / L1) (Acholeplasma florum).